The sequence spans 248 residues: Carboxy-S-adenosyl-L-methionine synthase (248 aa).

S-adenosyl-L-methionine is bound by residues Y40, 65-67 (GCS), 95-96 (DN), 123-124 (DI), N138, and R205.

This sequence belongs to the class I-like SAM-binding methyltransferase superfamily. Cx-SAM synthase family. In terms of assembly, homodimer.

The enzyme catalyses prephenate + S-adenosyl-L-methionine = carboxy-S-adenosyl-L-methionine + 3-phenylpyruvate + H2O. In terms of biological role, catalyzes the conversion of S-adenosyl-L-methionine (SAM) to carboxy-S-adenosyl-L-methionine (Cx-SAM). The sequence is that of Carboxy-S-adenosyl-L-methionine synthase from Hahella chejuensis (strain KCTC 2396).